A 227-amino-acid polypeptide reads, in one-letter code: MPPYPAVRIPAKAAHTATVIFLHGLGDSGAGWMFLAEEARKAQRLNHVKFIFPEAPQQPVSLNFGMRMPSWYDIKELANVNAAQDQEGILESVGRLESLIKEETDAGVPANRIVIGGFSQGCAVSLATGCLTQTKLGGIVGLSGYVPIKDYILSQHNTTNQDTPMFLAHGTADQVIRFDYGKLSRDFIINELKFKNVDWHQYEGLTHSCGFEEISDILNWLEENIKE.

Catalysis depends on charge relay system residues Ser119, Asp173, and His207.

It belongs to the AB hydrolase superfamily. AB hydrolase 2 family.

The protein resides in the cytoplasm. The protein localises to the nucleus. It carries out the reaction S-hexadecanoyl-L-cysteinyl-[protein] + H2O = L-cysteinyl-[protein] + hexadecanoate + H(+). In terms of biological role, hydrolyzes fatty acids from S-acylated cysteine residues in proteins with a strong preference for palmitoylated G-alpha proteins over other acyl substrates. Mediates the deacylation of G-alpha proteins such as GPA1 in vivo, but has weak or no activity toward palmitoylated Ras proteins. Has weak lysophospholipase activity in vitro; however such activity may not exist in vivo. In Yarrowia lipolytica (strain CLIB 122 / E 150) (Yeast), this protein is Acyl-protein thioesterase 1.